A 237-amino-acid chain; its full sequence is Small ribosomal subunit protein uS17m (237 aa).

It belongs to the universal ribosomal protein uS17 family. Component of the mitochondrial small ribosomal subunit (mt-SSU). Mature yeast 74S mitochondrial ribosomes consist of a small (37S) and a large (54S) subunit. The 37S small subunit contains a 15S ribosomal RNA (15S mt-rRNA) and 34 different proteins. The 54S large subunit contains a 21S rRNA (21S mt-rRNA) and 46 different proteins.

The protein resides in the mitochondrion. In terms of biological role, component of the mitochondrial ribosome (mitoribosome), a dedicated translation machinery responsible for the synthesis of mitochondrial genome-encoded proteins, including at least some of the essential transmembrane subunits of the mitochondrial respiratory chain. The mitoribosomes are attached to the mitochondrial inner membrane and translation products are cotranslationally integrated into the membrane. uS17m may have a meiosis-specific role as it accumulates during the middle stage of sporulation. The chain is Small ribosomal subunit protein uS17m (MRPS17) from Saccharomyces cerevisiae (strain ATCC 204508 / S288c) (Baker's yeast).